The chain runs to 325 residues: Melanocortin receptor 5 (325 aa).

At 1-37 (MNSSSTLTVLNLTLNASEDGILGSNVKNKSLACEEMG) the chain is on the extracellular side. Residues N2, N11, N15, and N28 are each glycosylated (N-linked (GlcNAc...) asparagine). The helical transmembrane segment at 38 to 61 (IAVEVFLTLGLVSLLENILVIGAI) threads the bilayer. Over 62–73 (VKNKNLHSPMYF) the chain is Cytoplasmic. A helical transmembrane segment spans residues 74 to 97 (FVGSLAVADMLVSMSNAWETVTIY). The Extracellular portion of the chain corresponds to 98 to 114 (LLNNKHLVIADTFVRHI). Residues 115–138 (DNVFDSMICISVVASMCSLLAIAV) form a helical membrane-spanning segment. The Cytoplasmic segment spans residues 139 to 155 (DRYITIFYALRYHHIMT). Residues 156–179 (ARRSGVIIACIWTFCISCGIVFII) traverse the membrane as a helical segment. The Extracellular segment spans residues 180 to 186 (YYESKYV). A helical membrane pass occupies residues 187–211 (IICLISMFFTMLFFMVSLYIHMFLL). Over 212–239 (ARNHVKRIAASPRYNSVRQRTSMKGAIT) the chain is Cytoplasmic. The chain crosses the membrane as a helical span at residues 240-265 (LTMLLGIFIVCWSPFFLHLILMISCP). Residues 266–273 (QNVYCSCF) lie on the Extracellular side of the membrane. Residues 274–297 (MSYFNMYLILIMCNSVIDPLIYAL) traverse the membrane as a helical segment. The Cytoplasmic portion of the chain corresponds to 298 to 325 (RSQEMRRTFKEIVCCHGFRRPCRLLGGY). Residues C311 and C312 are each lipidated (S-palmitoyl cysteine).

Belongs to the G-protein coupled receptor 1 family. In terms of tissue distribution, skin, adrenal gland, skeletal muscle, bone marrow, spleen, thymus, gonads, uterus and brain.

Its subcellular location is the cell membrane. Its function is as follows. Receptor for MSH (alpha, beta and gamma) and ACTH. The activity of this receptor is mediated by G proteins which activate adenylate cyclase. This receptor is a possible mediator of the immunomodulation properties of melanocortins. In Mus musculus (Mouse), this protein is Melanocortin receptor 5 (Mc5r).